A 363-amino-acid chain; its full sequence is MWRSYKAETPELADETQEVDLNLHDSSESDHEGRQSRSASITSSTSAPASNDVTLQVPITNSSATSPTPSTGSMYFIAGMFDGKEKVNREQPPMPTTDGVEYPRAASWAAGNCANVLNDDKGKQLFRVFLFQSLAEENLAFLEAMEKLKKMKISDEKVAYAKEILETYQGSINLSSSSMKSLRNAVASETLDMEEFAPAIKEVRRLLENDQFPRFRRSELYLEYLEELLPRSYAEKWAQSFEGLLGNHVGRHHFRIFLRSIHAEENLRFWEAVVEFRSSRHKANAMNNLGKVILSTYLAEGTTNEVFLPFGVRQVIERRIQDNQIDITLFDEAIKHVEQVLRNDPYVRFLQSSQYIDLLSKLK.

The disordered stretch occupies residues 1-70 (MWRSYKAETP…NSSATSPTPS (70 aa)). Over residues 21–35 (LNLHDSSESDHEGRQ) the composition is skewed to basic and acidic residues. Composition is skewed to low complexity over residues 36–50 (SRSA…APAS) and 58–70 (PITN…PTPS). RGS domains lie at 112-225 (NCAN…LEYL) and 240-359 (SFEG…IDLL).

In terms of processing, may be phosphorylated and activated by egl-4.

In terms of biological role, modulates chemotaxis responses by regulating positively the sensitivity to CO2 levels in BAG neurons and by regulating negatively the sensitivity to quinine in ASH sensory neurons. This chain is Regulator of G-protein signaling rgs-3 (rgs-3), found in Caenorhabditis elegans.